The chain runs to 728 residues: E3 ubiquitin-protein ligase LNX (728 aa).

The segment at 45–83 adopts an RING-type zinc-finger fold; that stretch reads CHICLQALLDPLDTPCGHTYCTLCLTNFLVEKDFCPVDR. The NPXY motif signature appears at 185–188; the sequence is NPAY. The tract at residues 185–220 is disordered; it reads NPAYVSSVEDGEPVANSSDSGRSNRTRARPFERSTM. Residues 186 to 244 form an interaction with MAGEB18 region; that stretch reads PAYVSSVEDGEPVANSSDSGRSNRTRARPFERSTMRSRSFKKINRALSALRRTKSGSVV. PDZ domains follow at residues 278-362 and 385-467; these read SIKI…VLRE and HVIL…VSRQ. Serine 445 is subject to Phosphoserine. The interval 481–500 is disordered; it reads WISNGQQSPGPGERNTASKP. 2 consecutive PDZ domains span residues 508 to 593 and 638 to 723; these read VVSV…ALEV and DVIL…IASW.

Interacts with CXADR. Interacts with MAGEB18 and MAGEF1. Interacts with the phosphotyrosine interaction domain of all isoforms of NUMB. IGSF5/JAM4 interacts with isoform 2 through the second PDZ domain, other isoforms may also interact with IGSF5/JAM4. As to expression, isoform 1 and isoform 2 are expressed in the heart. Isoform 1 is also expressed in kidney, lung and skeletal muscle while isoform 2 is also expressed in brain.

The protein resides in the cytoplasm. It catalyses the reaction S-ubiquitinyl-[E2 ubiquitin-conjugating enzyme]-L-cysteine + [acceptor protein]-L-lysine = [E2 ubiquitin-conjugating enzyme]-L-cysteine + N(6)-ubiquitinyl-[acceptor protein]-L-lysine.. The protein operates within protein modification; protein ubiquitination. In terms of biological role, E3 ubiquitin-protein ligase that mediates ubiquitination and subsequent proteasomal degradation of NUMB. E3 ubiquitin ligases accept ubiquitin from an E2 ubiquitin-conjugating enzyme in the form of a thioester and then directly transfers the ubiquitin to targeted substrates. Mediates ubiquitination of isoform p66 and isoform p72 of NUMB, but not that of isoform p71 or isoform p65. Functionally, isoform 2 provides an endocytic scaffold for IGSF5/JAM4. This is E3 ubiquitin-protein ligase LNX (Lnx1) from Mus musculus (Mouse).